Here is a 245-residue protein sequence, read N- to C-terminus: Ribosomal RNA large subunit methyltransferase E (245 aa).

The segment at 1–25 is disordered; it reads MTKSPIGGNRSGRKLGQKVKKGKLK. The segment covering 11 to 25 has biased composition (basic residues); sequence SGRKLGQKVKKGKLK. S-adenosyl-L-methionine contacts are provided by G81, W83, D104, D120, and D144. Catalysis depends on K184, which acts as the Proton acceptor.

This sequence belongs to the class I-like SAM-binding methyltransferase superfamily. RNA methyltransferase RlmE family.

It is found in the cytoplasm. The enzyme catalyses uridine(2552) in 23S rRNA + S-adenosyl-L-methionine = 2'-O-methyluridine(2552) in 23S rRNA + S-adenosyl-L-homocysteine + H(+). Its function is as follows. Specifically methylates the uridine in position 2552 of 23S rRNA at the 2'-O position of the ribose in the fully assembled 50S ribosomal subunit. This Sinorhizobium fredii (strain NBRC 101917 / NGR234) protein is Ribosomal RNA large subunit methyltransferase E.